The primary structure comprises 312 residues: Olfactory receptor 7D2 (312 aa).

The Extracellular portion of the chain corresponds to 1–25 (MEAGNQTGFLEFILLGLSEDPELQP). A glycan (N-linked (GlcNAc...) asparagine) is linked at Asn-5. Residues 26-46 (FIFGLFLSMYLVTVLGNLLII) traverse the membrane as a helical segment. The Cytoplasmic segment spans residues 47–54 (LAISSDSH). A helical membrane pass occupies residues 55 to 75 (LHTPMYFFLSNLSWVDICFST). Residues 76–99 (CIVPKMLVNIQTENKAISYMDCLT) are Extracellular-facing. Cys-97 and Cys-189 are oxidised to a cystine. Residues 100–120 (QVYFSMFFPILDTLLLTVMAY) traverse the membrane as a helical segment. The Cytoplasmic portion of the chain corresponds to 121–139 (DRFVAVCHPLHYMIIMNPH). Residues 140–160 (LCGLLVFVTWLIGVMTSLLHI) traverse the membrane as a helical segment. Topologically, residues 161–197 (SLMMHLIFCKDFEIPHFFCELTYILQLACSDTFLNST) are extracellular. A helical transmembrane segment spans residues 198 to 217 (LIYFMTGVLGVFPLLGIIFS). At 218 to 237 (YSRIASSIRKMSSSGGKQKA) the chain is on the cytoplasmic side. The chain crosses the membrane as a helical span at residues 238-258 (LSTCGSHLSVVSLFYGTGIGV). The Extracellular portion of the chain corresponds to 259–271 (HFTSAVTHSSQKI). Residues 272-292 (SVASVMYTVVTPMLNPFIYSL) form a helical membrane-spanning segment. Residues 293 to 312 (RNKDVKGALGSLLSRAASCL) lie on the Cytoplasmic side of the membrane.

This sequence belongs to the G-protein coupled receptor 1 family.

It localises to the cell membrane. Its function is as follows. Odorant receptor. This chain is Olfactory receptor 7D2 (OR7D2), found in Homo sapiens (Human).